Here is a 139-residue protein sequence, read N- to C-terminus: Large ribosomal subunit protein uL22 (139 aa).

The interval 1-21 (MTAPEQTYRNKKQRKQQHKLR) is disordered. The segment covering 9–21 (RNKKQRKQQHKLR) has biased composition (basic residues).

The protein belongs to the universal ribosomal protein uL22 family. As to quaternary structure, part of the 50S ribosomal subunit.

Its function is as follows. This protein binds specifically to 23S rRNA; its binding is stimulated by other ribosomal proteins, e.g. L4, L17, and L20. It is important during the early stages of 50S assembly. It makes multiple contacts with different domains of the 23S rRNA in the assembled 50S subunit and ribosome. In terms of biological role, the globular domain of the protein is located near the polypeptide exit tunnel on the outside of the subunit, while an extended beta-hairpin is found that lines the wall of the exit tunnel in the center of the 70S ribosome. This is Large ribosomal subunit protein uL22 from Deinococcus geothermalis (strain DSM 11300 / CIP 105573 / AG-3a).